A 501-amino-acid polypeptide reads, in one-letter code: E3 ubiquitin-protein ligase TRIM35 (501 aa).

Met-1 is modified (N-acetylmethionine). Ser-8 is modified (phosphoserine). The segment at 21–61 (CAVCYDPFRDAVTLRCGHNFCRRCVSGCWEVQTTPSCPVCK) adopts an RING-type zinc-finger fold. The B box-type zinc-finger motif lies at 96–137 (RSPRPCRAHRAPLTLFCVEDKELLCCACQADARHQEHRVQPI). Zn(2+) contacts are provided by Cys-101, His-104, Cys-123, and His-129. Residues 209-252 (MKEESRKKHLLAEEKMKQLAEQTEALAREIERLQMEMKEDDMTF) are a coiled coil. Residues 284–495 (LESLQYRVWK…LRICHLRVSI (212 aa)) form the B30.2/SPRY domain.

In terms of assembly, interacts with PKM isoform M2, but not isoform M1; this interaction may compete with that between PKM and FGFR1, and hence reduces FGFR1-dependent tyrosine phosphorylation of PKM. Interacts with IRF7; this interaction promotes IRF7 proteasomal degradation. Interacts with TRAF3; this interaction promotes TRAF3 activation.

It is found in the cytoplasm. The protein localises to the nucleus. It catalyses the reaction S-ubiquitinyl-[E2 ubiquitin-conjugating enzyme]-L-cysteine + [acceptor protein]-L-lysine = [E2 ubiquitin-conjugating enzyme]-L-cysteine + N(6)-ubiquitinyl-[acceptor protein]-L-lysine.. Its pathway is protein modification; protein ubiquitination. Its function is as follows. E3 ubiquitin-protein ligase that participates in multiple biological processes including cell death, glucose metabolism, and in particular, the innate immune response. Mediates 'Lys-63'-linked polyubiquitination of TRAF3 thereby promoting type I interferon production via RIG-I signaling pathway. Can also catalyze 'Lys-48'-linked polyubiquitination and proteasomal degradation of viral proteins such as influenza virus PB2. Acts as a negative feedback regulator of TLR7- and TLR9-triggered signaling. Mechanistically, promotes the 'Lys-48'-linked ubiquitination of IRF7 and induces its degradation via a proteasome-dependent pathway. Reduces FGFR1-dependent tyrosine phosphorylation of PKM, inhibiting PKM-dependent lactate production, glucose metabolism, and cell growth. The chain is E3 ubiquitin-protein ligase TRIM35 (Trim35) from Rattus norvegicus (Rat).